Reading from the N-terminus, the 523-residue chain is FAD:protein FMN transferase (523 aa).

The next 3 membrane-spanning stretches (helical) occupy residues 88–108, 118–138, and 169–189; these read LLAGAGLAYLLPALAFVVALA, GGAALVGGVVLMFSFLPLVLL, and GLALAAGLVLAGGVRVLTAPA. Residues 277–279 and aspartate 336 contribute to the FAD site; that span reads LFD. Mg(2+) is bound at residue alanine 339. Residues lysine 342 and 423–425 each bind FAD; that span reads HII. Residues aspartate 450 and threonine 454 each contribute to the Mg(2+) site.

In the N-terminal section; belongs to the RseC family. The protein in the C-terminal section; belongs to the ApbE family. Mg(2+) is required as a cofactor.

It is found in the cell membrane. It carries out the reaction L-threonyl-[protein] + FAD = FMN-L-threonyl-[protein] + AMP + H(+). Flavin transferase that catalyzes the transfer of the FMN moiety of FAD and its covalent binding to the hydroxyl group of a threonine residue in a target flavoprotein. Is likely involved in the modification of RnfG and RnfD. Required for nitrogen fixation. This chain is FAD:protein FMN transferase, found in Rhodobacter capsulatus (Rhodopseudomonas capsulata).